A 220-amino-acid chain; its full sequence is Protein GrpE (220 aa).

The disordered stretch occupies residues 1–22; it reads MSDEKNKFTDASFENCDLKNPS.

It belongs to the GrpE family. As to quaternary structure, homodimer.

It localises to the cytoplasm. Participates actively in the response to hyperosmotic and heat shock by preventing the aggregation of stress-denatured proteins, in association with DnaK and GrpE. It is the nucleotide exchange factor for DnaK and may function as a thermosensor. Unfolded proteins bind initially to DnaJ; upon interaction with the DnaJ-bound protein, DnaK hydrolyzes its bound ATP, resulting in the formation of a stable complex. GrpE releases ADP from DnaK; ATP binding to DnaK triggers the release of the substrate protein, thus completing the reaction cycle. Several rounds of ATP-dependent interactions between DnaJ, DnaK and GrpE are required for fully efficient folding. This chain is Protein GrpE, found in Bartonella henselae (strain ATCC 49882 / DSM 28221 / CCUG 30454 / Houston 1) (Rochalimaea henselae).